Reading from the N-terminus, the 380-residue chain is Ubiquitin-like protein 7 (380 aa).

The Ubiquitin-like domain maps to 18-98 (APKSILQLPE…VLRKSWPEPD (81 aa)). The segment at 200–313 (TPMPGADSSS…SSGVQSGTPI (114 aa)) is disordered. Low complexity predominate over residues 206-221 (DSSSRSMPSSSYRDMP). Phosphoserine is present on serine 230. Composition is skewed to low complexity over residues 239 to 253 (STRSTPSSSTPSSRP) and 270 to 293 (SELATALALASTPESSSHTPTPGT). Polar residues predominate over residues 294 to 313 (QGHSSGTSPMSSGVQSGTPI). Residues 333–377 (SLQIQWQPQLQQLRDMGIQDDELSLRALQATGGDIQAALELIFAG) form the UBA domain.

Binds ubiquitin. Interacts with MAVS; this interaction enhances TRIM21-dependent 'Lys-27'-linked polyubiquitination of MAVS. In terms of processing, deubiquitinated by OTUD4 which stabilizes UBL7 expression.

Its function is as follows. Interferon-stimulated protein that positively regulates RNA virus-triggered innate immune signaling. Mechanistically, promotes 'Lys-27'-linked polyubiquitination of MAVS through TRIM21 leading to enhanced the IFN signaling pathway. The polypeptide is Ubiquitin-like protein 7 (Ubl7) (Mus musculus (Mouse)).